The chain runs to 634 residues: GTP-binding protein 4 (634 aa).

Position 2 is an N-acetylalanine (alanine 2). Lysine 103 is subject to N6-acetyllysine; alternate. Lysine 103 participates in a covalent cross-link: Glycyl lysine isopeptide (Lys-Gly) (interchain with G-Cter in SUMO2); alternate. Serine 122 is subject to Phosphoserine. The 172-residue stretch at 169-340 (RTLLLCGYPN…VKTEACDRLL (172 aa)) folds into the OBG-type G domain. Residues 175 to 182 (GYPNVGKS), 221 to 225 (DTPGI), and 289 to 292 (NKCD) contribute to the GTP site. Lysine 332 participates in a covalent cross-link: Glycyl lysine isopeptide (Lys-Gly) (interchain with G-Cter in SUMO2). Residues serine 468, serine 470, and serine 472 each carry the phosphoserine modification. Residues 494 to 634 (KILQSKEKNK…KRKAGKKDRR (141 aa)) are disordered. Residue lysine 534 forms a Glycyl lysine isopeptide (Lys-Gly) (interchain with G-Cter in SUMO2) linkage. Positions 544–554 (RRSRSVTRKRK) are enriched in basic residues. The residue at position 558 (serine 558) is a Phosphoserine. A compositionally biased stretch (low complexity) spans 560 to 572 (PPSSTARSRSCSR). Residues 573–585 (TPRDVSGLRDVKM) show a composition bias toward basic and acidic residues. Positions 586 to 604 (VKKAKTMMKKAQKKMNRLG) are enriched in basic residues. Positions 605–618 (KKGEADRHVFDMKP) are enriched in basic and acidic residues. Residues 619–634 (KHLLSGKRKAGKKDRR) show a composition bias toward basic residues.

Belongs to the TRAFAC class OBG-HflX-like GTPase superfamily. OBG GTPase family. NOG subfamily. In terms of assembly, associates with pre-60S ribosomal particles. Interacts with MINAS-60 (product of an alternative open reading frame of RBM10). As to expression, ubiquitous.

It is found in the nucleus. The protein resides in the nucleolus. Its function is as follows. Involved in the biogenesis of the 60S ribosomal subunit. Acts as TP53 repressor, preventing TP53 stabilization and cell cycle arrest. This is GTP-binding protein 4 (Gtpbp4) from Mus musculus (Mouse).